The chain runs to 861 residues: Integrator complex subunit 6-like (861 aa).

The VWFA domain occupies 3-227 (ILLFLIDTSA…QCLESLVQKV (225 aa)). S617 carries the post-translational modification Phosphoserine.

In Mus musculus (Mouse), this protein is Integrator complex subunit 6-like (Ints6l).